Consider the following 299-residue polypeptide: Oxygen-dependent coproporphyrinogen-III oxidase (299 aa).

Residue Ser92 participates in substrate binding. Positions 96 and 106 each coordinate a divalent metal cation. Catalysis depends on His106, which acts as the Proton donor. 108–110 (NVR) serves as a coordination point for substrate. Positions 145 and 175 each coordinate a divalent metal cation. Residues 240–275 (YVEFNLVWDRGTLFGLQTGGRTESILMSMPPLVRWE) are important for dimerization. 258–260 (GGR) contacts substrate.

Belongs to the aerobic coproporphyrinogen-III oxidase family. Homodimer. A divalent metal cation serves as cofactor.

It is found in the cytoplasm. The enzyme catalyses coproporphyrinogen III + O2 + 2 H(+) = protoporphyrinogen IX + 2 CO2 + 2 H2O. The protein operates within porphyrin-containing compound metabolism; protoporphyrin-IX biosynthesis; protoporphyrinogen-IX from coproporphyrinogen-III (O2 route): step 1/1. Functionally, involved in the heme biosynthesis. Catalyzes the aerobic oxidative decarboxylation of propionate groups of rings A and B of coproporphyrinogen-III to yield the vinyl groups in protoporphyrinogen-IX. In Salmonella schwarzengrund (strain CVM19633), this protein is Oxygen-dependent coproporphyrinogen-III oxidase.